The following is a 312-amino-acid chain: Protoheme IX farnesyltransferase (312 aa).

The Cytoplasmic portion of the chain corresponds to 1-36 (MNKSNTAIDPTNVIEAGPDSSVADVQQKSWKDYLVL). A helical membrane pass occupies residues 37-55 (AKQGIVTSNLITTFAGIYL). Residues 56 to 69 (AIVYTGTVFTMHLD) lie on the Extracellular side of the membrane. A helical transmembrane segment spans residues 70-88 (TMIFALLGAALVMAGGCTL). Topologically, residues 89–110 (NNYIDRDIDHLMERTKERPTVT) are cytoplasmic. A helical membrane pass occupies residues 111–129 (GRFSAKHVLLVGLAQAALG). Residues 130-138 (IIFLALTTP) lie on the Extracellular side of the membrane. Residues 139-157 (TAAVIGLIGLFIYVVLYTM) form a helical membrane-spanning segment. At 158–228 (WTKRTTTLNT…YRAAGIPMLP (71 aa)) the chain is on the cytoplasmic side. The helical transmembrane segment at 229–247 (VVAGFEMTKRQMVVYVAAL) threads the bilayer. The Extracellular portion of the chain corresponds to 248–259 (LPVSLMLYPFGL). The helical transmembrane segment at 260–275 (VYTIVAAVLGVGWLAL) threads the bilayer. The Cytoplasmic portion of the chain corresponds to 276-296 (GIAGFKMKDDIKWARLMFVYS). The chain crosses the membrane as a helical span at residues 297 to 307 (LNYLTILFVLM). The Extracellular portion of the chain corresponds to 308–312 (VIVHF).

Belongs to the UbiA prenyltransferase family.

It is found in the cell membrane. It catalyses the reaction heme b + (2E,6E)-farnesyl diphosphate + H2O = Fe(II)-heme o + diphosphate. Its pathway is porphyrin-containing compound metabolism; heme O biosynthesis; heme O from protoheme: step 1/1. Functionally, converts protoheme IX and farnesyl diphosphate to heme O. In Alkalihalophilus pseudofirmus (strain ATCC BAA-2126 / JCM 17055 / OF4) (Bacillus pseudofirmus), this protein is Protoheme IX farnesyltransferase (ctaB).